The chain runs to 309 residues: uncharacterized protein (309 aa).

Residues 272–291 (PSLDAPSETVEAFPEPQKNL) are disordered.

This is an uncharacterized protein from Bacillus subtilis (strain 168).